Consider the following 143-residue polypeptide: Gastrin-releasing peptide (143 aa).

The signal sequence occupies residues Met1–Ala23. Met50 carries the post-translational modification Methionine amide. A propeptide spanning residues Ser54–Ser143 is cleaved from the precursor. The disordered stretch occupies residues Lys91 to Asp115. The segment covering Gly92–Leu111 has biased composition (polar residues).

It belongs to the bombesin/neuromedin-B/ranatensin family.

It localises to the secreted. The protein localises to the cytoplasmic vesicle. The protein resides in the secretory vesicle lumen. Its subcellular location is the cell projection. It is found in the neuron projection. Stimulates the release of gastrin and other gastrointestinal hormones. Contributes to the perception of prurient stimuli and to the transmission of itch signals in the spinal cord that promote scratching behavior. Contributes primarily to nonhistaminergic itch sensation. In one study, shown to act in the amygdala as part of an inhibitory network which inhibits memory specifically related to learned fear. In another study, shown to act on vasoactive intestinal peptide (VIP)-expressing cells in the auditory cortex, most likely via extrasynaptic diffusion from local and long-range sources, to mediate disinhibition of glutamatergic cells via VIP cell-specific GRPR signaling which leads to enhanced auditory fear memories. Contributes to the regulation of food intake. Inhibits voltage-gated sodium channels but enhances voltage-gated potassium channels in hippocampal neurons. Induces sighing by acting directly on the pre-Botzinger complex, a cluster of several thousand neurons in the ventrolateral medulla responsible for inspiration during respiratory activity. In terms of biological role, induces an itch response through activation of receptors present on mast cells, triggering mast cell degranulation. This is Gastrin-releasing peptide (GRP) from Cavia porcellus (Guinea pig).